Here is a 421-residue protein sequence, read N- to C-terminus: Tyrosine--tRNA ligase (421 aa).

Tyr-35 serves as a coordination point for L-tyrosine. The short motif at 40 to 49 (PTADSLHIGH) is the 'HIGH' region element. Tyr-170 and Gln-174 together coordinate L-tyrosine. The 'KMSKS' region motif lies at 232-236 (KFGKT). ATP is bound at residue Lys-235. Residues 355–421 (LSLVDVLVES…GKKKYFLITY (67 aa)) enclose the S4 RNA-binding domain.

It belongs to the class-I aminoacyl-tRNA synthetase family. TyrS type 1 subfamily. As to quaternary structure, homodimer.

It localises to the cytoplasm. It catalyses the reaction tRNA(Tyr) + L-tyrosine + ATP = L-tyrosyl-tRNA(Tyr) + AMP + diphosphate + H(+). In terms of biological role, catalyzes the attachment of tyrosine to tRNA(Tyr) in a two-step reaction: tyrosine is first activated by ATP to form Tyr-AMP and then transferred to the acceptor end of tRNA(Tyr). This Bacillus velezensis (strain DSM 23117 / BGSC 10A6 / LMG 26770 / FZB42) (Bacillus amyloliquefaciens subsp. plantarum) protein is Tyrosine--tRNA ligase.